Reading from the N-terminus, the 484-residue chain is Glycogen synthase (484 aa).

K15 contributes to the ADP-alpha-D-glucose binding site.

It belongs to the glycosyltransferase 1 family. Bacterial/plant glycogen synthase subfamily.

The catalysed reaction is [(1-&gt;4)-alpha-D-glucosyl](n) + ADP-alpha-D-glucose = [(1-&gt;4)-alpha-D-glucosyl](n+1) + ADP + H(+). It participates in glycan biosynthesis; glycogen biosynthesis. In terms of biological role, synthesizes alpha-1,4-glucan chains using ADP-glucose. The protein is Glycogen synthase of Geotalea daltonii (strain DSM 22248 / JCM 15807 / FRC-32) (Geobacter daltonii).